A 139-amino-acid chain; its full sequence is uncharacterized protein (139 aa).

This is an uncharacterized protein from Dryophytes versicolor (chameleon treefrog).